The sequence spans 109 residues: Nucleoid-associated protein plu3840 (109 aa).

Disordered stretches follow at residues 1–23 and 89–109; these read MFGK…KMQK and KEKM…KMPF.

It belongs to the YbaB/EbfC family. In terms of assembly, homodimer.

It localises to the cytoplasm. The protein localises to the nucleoid. Binds to DNA and alters its conformation. May be involved in regulation of gene expression, nucleoid organization and DNA protection. This chain is Nucleoid-associated protein plu3840, found in Photorhabdus laumondii subsp. laumondii (strain DSM 15139 / CIP 105565 / TT01) (Photorhabdus luminescens subsp. laumondii).